A 63-amino-acid polypeptide reads, in one-letter code: Large ribosomal subunit protein uL29 (63 aa).

The protein belongs to the universal ribosomal protein uL29 family.

This chain is Large ribosomal subunit protein uL29 (rpmC), found in Buchnera aphidicola subsp. Acyrthosiphon kondoi (Acyrthosiphon kondoi symbiotic bacterium).